The sequence spans 51 residues: Protein I177L (51 aa).

A glycan (N-linked (GlcNAc...) asparagine; by host) is linked at asparagine 11.

Belongs to the asfivirus I177L family.

It is found in the virion. This chain is Protein I177L, found in Ornithodoros (relapsing fever ticks).